A 337-amino-acid polypeptide reads, in one-letter code: Viral cathepsin (337 aa).

The signal sequence occupies residues 1-18 (MYLIYYYTIIAVATASIA). The propeptide at 19 to 126 (NEKIFYDIDS…VTVAGPSART (108 aa)) is activation peptide. 3 cysteine pairs are disulfide-bonded: cysteine 147/cysteine 188, cysteine 181/cysteine 221, and cysteine 276/cysteine 324. Residue cysteine 150 is part of the active site. Catalysis depends on residues histidine 283 and asparagine 303.

The protein belongs to the peptidase C1 family. Post-translationally, synthesized as an inactive proenzyme and activated by proteolytic removal of the inhibitory propeptide.

The enzyme catalyses Endopeptidase of broad specificity, hydrolyzing substrates of both cathepsin L and cathepsin B.. In terms of biological role, cysteine protease that plays an essential role in host liquefaction to facilitate horizontal transmission of the virus. May participate in the degradation of foreign protein expressed by the baculovirus system. The chain is Viral cathepsin (VCATH) from Spodoptera litura multicapsid nucleopolyhedrovirus (SpltMNPV).